The chain runs to 361 residues: DNA replication and repair protein RecF (361 aa).

Residue 30–37 (GPNGSGKT) coordinates ATP.

It belongs to the RecF family.

The protein localises to the cytoplasm. Its function is as follows. The RecF protein is involved in DNA metabolism; it is required for DNA replication and normal SOS inducibility. RecF binds preferentially to single-stranded, linear DNA. It also seems to bind ATP. The protein is DNA replication and repair protein RecF of Yersinia pestis.